The primary structure comprises 531 residues: Bifunctional protein TrpGD (531 aa).

Residues 3 to 196 form the Glutamine amidotransferase type-1 domain; it reads DILLLDNIDS…LAWAQQKLEP (194 aa). 57–59 is a binding site for L-glutamine; the sequence is GPG. Catalysis depends on cysteine 84, which acts as the Nucleophile; for GATase activity. L-glutamine contacts are provided by residues glutamine 88 and 134-135; that span reads SL. Active-site for GATase activity residues include histidine 170 and glutamate 172. The tract at residues 202-531 is anthranilate phosphoribosyltransferase; sequence PILEKLYQAQ…DRVTALAARG (330 aa).

This sequence in the C-terminal section; belongs to the anthranilate phosphoribosyltransferase family. As to quaternary structure, heterotetramer consisting of two non-identical subunits: a beta subunit (TrpG) and a large alpha subunit (TrpE).

It carries out the reaction chorismate + L-glutamine = anthranilate + pyruvate + L-glutamate + H(+). The catalysed reaction is N-(5-phospho-beta-D-ribosyl)anthranilate + diphosphate = 5-phospho-alpha-D-ribose 1-diphosphate + anthranilate. Its pathway is amino-acid biosynthesis; L-tryptophan biosynthesis; L-tryptophan from chorismate: step 1/5. The protein operates within amino-acid biosynthesis; L-tryptophan biosynthesis; L-tryptophan from chorismate: step 2/5. With respect to regulation, cooperatively feedback inhibited by tryptophan. In terms of biological role, part of a heterotetrameric complex that catalyzes the two-step biosynthesis of anthranilate, an intermediate in the biosynthesis of L-tryptophan. In the first step, the glutamine-binding beta subunit (TrpG) of anthranilate synthase (AS) provides the glutamine amidotransferase activity which generates ammonia as a substrate that, along with chorismate, is used in the second step, catalyzed by the large alpha subunit of AS (TrpE) to produce anthranilate. In the absence of TrpG, TrpE can synthesize anthranilate directly from chorismate and high concentrations of ammonia. In addition to synthesizing anthranilate, it also catalyzes the second step of the pathway, the transfer of the phosphoribosyl group of 5-phosphorylribose-1-pyrophosphate (PRPP) to anthranilate. This Escherichia coli (strain K12) protein is Bifunctional protein TrpGD (trpGD).